The chain runs to 1312 residues: Probable histone-lysine N-methyltransferase lin-59 (1312 aa).

Polar residues-rich tracts occupy residues 1-11 (MHGAGEQQQRY) and 25-36 (STSSHQYQQQGA). 5 disordered regions span residues 1–41 (MHGA…QMHQ), 54–81 (TTTSAAASTSSSGGSNSSGGSGGHRQQG), 154–223 (QPSG…KPVD), 312–435 (EESK…PPPV), and 524–556 (KDNIKKEVKEESTPPPTKLRGRLPSRRTREPSE). Low complexity predominate over residues 54-68 (TTTSAAASTSSSGGS). Gly residues predominate over residues 69–78 (NSSGGSGGHR). A compositionally biased stretch (low complexity) spans 160 to 176 (PMSSNAPATTSSATPDS). A compositionally biased stretch (acidic residues) spans 200–210 (DHDDEEDDDGP). Residues 312-321 (EESKKKKDME) are compositionally biased toward basic and acidic residues. Polar residues predominate over residues 344-367 (ATRSTNSPDVTTSNLPEEPSTSTM). A compositionally biased stretch (basic and acidic residues) spans 371–382 (KENEDVEKVEGK). Over residues 383-394 (RRGRKPKKRRGF) the composition is skewed to basic residues. Composition is skewed to basic and acidic residues over residues 395–419 (HKESFEDLESDAKKSKAEQHEDHLP) and 524–535 (KDNIKKEVKEES). The AWS domain maps to 590-635 (APSLTCGCTKGACTSDMDCLNRALRVQCSSDCSVPYCSNRRFWKED). The 113-residue stretch at 638–750 (NKLCVSNGPR…PNAEITVDKS (113 aa)) folds into the SET domain. The segment at 913 to 934 (DNAPRARALSTSCPSPVPSKRG) is disordered. The PHD-type zinc finger occupies 967 to 1027 (AVRCICGALD…EYICDFCTNK (61 aa)). In terms of domain architecture, BAH spans 1100–1223 (NKYRFPKAAT…KTQRVFEKVP (124 aa)). The interval 1248-1295 (RDFRPYDPSNPSPKPPKTSSIPSTSSIDPPQSSSDGLPEVDTKKLSKR) is disordered. Positions 1264–1281 (KTSSIPSTSSIDPPQSSS) are enriched in low complexity.

The protein belongs to the class V-like SAM-binding methyltransferase superfamily. Histone-lysine methyltransferase family. SET2 subfamily. In terms of tissue distribution, widely expressed throughout embryonic development and into adulthood.

It is found in the nucleus. It carries out the reaction L-lysyl-[histone] + S-adenosyl-L-methionine = N(6)-methyl-L-lysyl-[histone] + S-adenosyl-L-homocysteine + H(+). Probable histone methyltransferase. Essential protein required to maintain expression of homeotic genes egl-5 and mab-5. May play an analogous role to the trithorax Group (trxG) proteins. TrxG proteins form multiprotein complexes that are required to maintain the transcriptionally active state of homeotic genes throughout development. May act via a modification of chromatin. This Caenorhabditis elegans protein is Probable histone-lysine N-methyltransferase lin-59 (lin-59).